A 244-amino-acid chain; its full sequence is tRNA pseudouridine synthase B (244 aa).

Asp46 (nucleophile) is an active-site residue.

This sequence belongs to the pseudouridine synthase TruB family. Type 1 subfamily.

The enzyme catalyses uridine(55) in tRNA = pseudouridine(55) in tRNA. Functionally, responsible for synthesis of pseudouridine from uracil-55 in the psi GC loop of transfer RNAs. This is tRNA pseudouridine synthase B from Bordetella avium (strain 197N).